Here is a 150-residue protein sequence, read N- to C-terminus: Cdc42 effector protein 5 (150 aa).

Disordered stretches follow at residues 1–20, 34–89, and 114–133; these read MPVMKQLGPAQPKKRLDRGA, LHVG…PADP, and SETTATKPDGDAHPRVQHPK. Residues 23-37 form the CRIB domain; that stretch reads ISAPLGDFRHTLHVG. Arg-38 carries the omega-N-methylarginine modification. Pro residues-rich tracts occupy residues 55 to 66 and 74 to 87; these read GPPPEPGAPPVV and PAAPQPPVAVPSPA. Residues 114–127 show a composition bias toward basic and acidic residues; it reads SETTATKPDGDAHP.

It belongs to the BORG/CEP family. As to quaternary structure, interacts with CDC42 in a GTP-dependent manner, and with SEPT7. As to expression, highly expressed in the skeletal muscle.

The protein resides in the endomembrane system. It localises to the cytoplasm. The protein localises to the cytoskeleton. Its function is as follows. Probably involved in the organization of the actin cytoskeleton. May act downstream of CDC42 to induce actin filament assembly leading to cell shape changes. Induces pseudopodia formation in fibroblasts. Inhibits MAPK8 independently of CDC42 binding. Controls septin organization and this effect is negatively regulated by CDC42. This Mus musculus (Mouse) protein is Cdc42 effector protein 5 (Cdc42ep5).